The following is a 644-amino-acid chain: Chaperone protein HtpG (644 aa).

The a; substrate-binding stretch occupies residues 1–352; sequence MNARVEQLEF…AQDMSLNVSR (352 aa). The tract at residues 353-566 is b; it reads EILQQDRQIK…AFGITPALAR (214 aa). The segment at 567-644 is c; the sequence is LYRASGQDIP…ILADRLARTL (78 aa).

Belongs to the heat shock protein 90 family. In terms of assembly, homodimer.

The protein localises to the cytoplasm. Molecular chaperone. Has ATPase activity. The sequence is that of Chaperone protein HtpG from Mycobacterium avium (strain 104).